The sequence spans 127 residues: CDGSH iron-sulfur domain-containing protein 3, mitochondrial (127 aa).

The N-terminal 14 residues, 1–14 (MRGAGAILRPAARG), are a transit peptide targeting the mitochondrion. Position 55 is an N6-acetyllysine; alternate (lysine 55). Position 55 is an N6-succinyllysine; alternate (lysine 55). [2Fe-2S] cluster is bound by residues cysteine 60, cysteine 62, cysteine 71, and histidine 75. Residue lysine 86 is modified to N6-acetyllysine. 4 residues coordinate [2Fe-2S] cluster: cysteine 98, cysteine 100, cysteine 109, and histidine 113.

The protein belongs to the CISD protein family. As to quaternary structure, monomer. Requires [2Fe-2S] cluster as cofactor.

The protein localises to the mitochondrion. Can transfer its iron-sulfur clusters to the apoferrodoxins FDX1 and FDX2. Contributes to mitochondrial iron homeostasis and in maintaining normal levels of free iron and reactive oxygen species, and thereby contributes to normal mitochondrial function. This is CDGSH iron-sulfur domain-containing protein 3, mitochondrial (CISD3) from Homo sapiens (Human).